The chain runs to 300 residues: Eukaryotic translation initiation factor 3 subunit F (300 aa).

The region spanning 33–169 (VKVHPVALFS…VQCYVSALLG (137 aa)) is the MPN domain.

It belongs to the eIF-3 subunit F family. In terms of assembly, component of the eukaryotic translation initiation factor 3 (eIF-3) complex.

The protein resides in the cytoplasm. Functionally, component of the eukaryotic translation initiation factor 3 (eIF-3) complex, which is involved in protein synthesis of a specialized repertoire of mRNAs and, together with other initiation factors, stimulates binding of mRNA and methionyl-tRNAi to the 40S ribosome. The eIF-3 complex specifically targets and initiates translation of a subset of mRNAs involved in cell proliferation. The chain is Eukaryotic translation initiation factor 3 subunit F from Malassezia globosa (strain ATCC MYA-4612 / CBS 7966) (Dandruff-associated fungus).